The chain runs to 444 residues: NEDD8-activating enzyme E1 catalytic subunit (444 aa).

Position 54–78 (54–78 (GLGCEILKDLALSGFRDLSVIDMDT)) interacts with ATP. Residue cysteine 205 is the Glycyl thioester intermediate of the active site.

Belongs to the ubiquitin-activating E1 family. UBA3 subfamily. As to quaternary structure, heterodimer of uba3 and ula1. Interacts with NEDD8 and ubc12. Interacts with but1 and but2.

The catalysed reaction is ATP + [NEDD8 protein] + [E1 NEDD8-activating enzyme]-L-cysteine = AMP + diphosphate + [E1 NEDD8-activating enzyme]-S-[NEDD8 protein]-yl-L-cysteine.. The protein operates within protein modification; protein neddylation. Catalytic subunit of the dimeric uba3-ula1 E1 enzyme. E1 activates NEDD8/ubl1 by first adenylating its C-terminal glycine residue with ATP, thereafter linking this residue to the side chain of the catalytic cysteine, yielding a NEDD8-uba3 thioester and free AMP. E1 finally transfers NEDD8 to the catalytic cysteine of ubc12. In Schizosaccharomyces pombe (strain 972 / ATCC 24843) (Fission yeast), this protein is NEDD8-activating enzyme E1 catalytic subunit (uba3).